Here is a 353-residue protein sequence, read N- to C-terminus: Photosystem II D2 protein (353 aa).

Residue T2 is modified to N-acetylthreonine. T2 is subject to Phosphothreonine. A helical transmembrane segment spans residues 41 to 61 (CAYFALGGWFTGTTFVTSWYT). Residue H118 participates in chlorophyll a binding. The helical transmembrane segment at 125–141 (GFMLRQFELARSVQLRP) threads the bilayer. Pheophytin a-binding residues include Q130 and N143. Residues 153–166 (VFVSVFLIYPLGQS) form a helical membrane-spanning segment. Residue H198 participates in chlorophyll a binding. Residues 208–228 (AALLCAIHGATVENTLFEDGD) form a helical membrane-spanning segment. Residues H215 and F262 each coordinate a plastoquinone. H215 serves as a coordination point for Fe cation. H269 serves as a coordination point for Fe cation. Residues 279–295 (GLWMSALGVVGLALNLR) traverse the membrane as a helical segment.

Belongs to the reaction center PufL/M/PsbA/D family. As to quaternary structure, PSII is composed of 1 copy each of membrane proteins PsbA, PsbB, PsbC, PsbD, PsbE, PsbF, PsbH, PsbI, PsbJ, PsbK, PsbL, PsbM, PsbT, PsbX, PsbY, PsbZ, Psb30/Ycf12, at least 3 peripheral proteins of the oxygen-evolving complex and a large number of cofactors. It forms dimeric complexes. Requires The D1/D2 heterodimer binds P680, chlorophylls that are the primary electron donor of PSII, and subsequent electron acceptors. It shares a non-heme iron and each subunit binds pheophytin, quinone, additional chlorophylls, carotenoids and lipids. There is also a Cl(-1) ion associated with D1 and D2, which is required for oxygen evolution. The PSII complex binds additional chlorophylls, carotenoids and specific lipids. as cofactor.

It is found in the plastid. The protein resides in the chloroplast thylakoid membrane. It catalyses the reaction 2 a plastoquinone + 4 hnu + 2 H2O = 2 a plastoquinol + O2. Functionally, photosystem II (PSII) is a light-driven water:plastoquinone oxidoreductase that uses light energy to abstract electrons from H(2)O, generating O(2) and a proton gradient subsequently used for ATP formation. It consists of a core antenna complex that captures photons, and an electron transfer chain that converts photonic excitation into a charge separation. The D1/D2 (PsbA/PsbD) reaction center heterodimer binds P680, the primary electron donor of PSII as well as several subsequent electron acceptors. D2 is needed for assembly of a stable PSII complex. In Morus indica (Mulberry), this protein is Photosystem II D2 protein.